Here is a 514-residue protein sequence, read N- to C-terminus: 2,3-bisphosphoglycerate-independent phosphoglycerate mutase (514 aa).

Mn(2+) is bound by residues Asp14 and Ser64. The Phosphoserine intermediate role is filled by Ser64. Residues His125, 155 to 156 (RD), Arg187, Arg193, 263 to 266 (RADR), and Lys336 each bind substrate. Mn(2+)-binding residues include Asp403, His407, Asp444, His445, and His463.

It belongs to the BPG-independent phosphoglycerate mutase family. As to quaternary structure, monomer. The cofactor is Mn(2+).

It catalyses the reaction (2R)-2-phosphoglycerate = (2R)-3-phosphoglycerate. It functions in the pathway carbohydrate degradation; glycolysis; pyruvate from D-glyceraldehyde 3-phosphate: step 3/5. Catalyzes the interconversion of 2-phosphoglycerate and 3-phosphoglycerate. The polypeptide is 2,3-bisphosphoglycerate-independent phosphoglycerate mutase (Shewanella sp. (strain MR-4)).